A 305-amino-acid polypeptide reads, in one-letter code: UDP-3-O-acyl-N-acetylglucosamine deacetylase (305 aa).

Residues His-79, His-238, and Asp-242 each contribute to the Zn(2+) site. The Proton donor role is filled by His-265.

This sequence belongs to the LpxC family. Requires Zn(2+) as cofactor.

It catalyses the reaction a UDP-3-O-[(3R)-3-hydroxyacyl]-N-acetyl-alpha-D-glucosamine + H2O = a UDP-3-O-[(3R)-3-hydroxyacyl]-alpha-D-glucosamine + acetate. Its pathway is glycolipid biosynthesis; lipid IV(A) biosynthesis; lipid IV(A) from (3R)-3-hydroxytetradecanoyl-[acyl-carrier-protein] and UDP-N-acetyl-alpha-D-glucosamine: step 2/6. Its function is as follows. Catalyzes the hydrolysis of UDP-3-O-myristoyl-N-acetylglucosamine to form UDP-3-O-myristoylglucosamine and acetate, the committed step in lipid A biosynthesis. This is UDP-3-O-acyl-N-acetylglucosamine deacetylase from Haemophilus influenzae (strain PittEE).